A 347-amino-acid chain; its full sequence is Transcription factor JunB (347 aa).

Glycyl lysine isopeptide (Lys-Gly) (interchain with G-Cter in SUMO2) cross-links involve residues Lys-4, Lys-33, and Lys-36. The interval 51–73 (KAPGARGPGPEGGGGGSYFSGQG) is disordered. Over residues 56–68 (RGPGPEGGGGGSY) the composition is skewed to gly residues. Lys-81 participates in a covalent cross-link: Glycyl lysine isopeptide (Lys-Gly) (interchain with G-Cter in SUMO2). Thr-102 and Thr-104 each carry phosphothreonine. Residue Ser-117 is modified to Phosphoserine. Lys-141 is covalently cross-linked (Glycyl lysine isopeptide (Lys-Gly) (interchain with G-Cter in SUMO2)). A compositionally biased stretch (basic and acidic residues) spans 239 to 253 (FKEEPQTVPEARSRD). The interval 239 to 260 (FKEEPQTVPEARSRDATPPVSP) is disordered. Position 240 is an N6-acetyllysine; alternate (Lys-240). Residue Lys-240 forms a Glycyl lysine isopeptide (Lys-Gly) (interchain with G-Cter in SUMO1); alternate linkage. A Glycyl lysine isopeptide (Lys-Gly) (interchain with G-Cter in SUMO2); alternate cross-link involves residue Lys-240. Residue Ser-251 is modified to Phosphoserine. Thr-255 carries the post-translational modification Phosphothreonine. The residue at position 259 (Ser-259) is a Phosphoserine. Residues 268 to 295 (RIKVERKRLRNRLAATKCRKRKLERIAR) are basic motif. One can recognise a bZIP domain in the interval 268–331 (RIKVERKRLR…AQLKQKVMTH (64 aa)). Residues 296 to 324 (LEDKVKTLKAENAGLSSTAGLLREQVAQL) are leucine-zipper. Lys-343 is covalently cross-linked (Glycyl lysine isopeptide (Lys-Gly) (interchain with G-Cter in SUMO2)).

The protein belongs to the bZIP family. Jun subfamily. As to quaternary structure, binds DNA as a homodimer or as a heterodimer with another member of the Jun/Fos family. Component of an AP-1 transcription factor complex composed of JUN-FOS heterodimers composed of JUN-FOS heterodimers. As part of the AP-1 transcription factor complex, forms heterodimers with FOSB, thereby binding to the AP-1 consensus sequence and stimulating transcription. Interacts with ITCH (via its WW domains). In terms of processing, ubiquitinated by ITCH, leading to its degradation.

Its subcellular location is the nucleus. In terms of biological role, transcription factor involved in regulating gene activity following the primary growth factor response. Binds to the DNA sequence 5'-TGA[GC]TCA-3'. Heterodimerizes with proteins of the FOS family to form an AP-1 transcription complex, thereby enhancing its DNA binding activity to an AP-1 consensus sequence and its transcriptional activity. In Homo sapiens (Human), this protein is Transcription factor JunB (JUNB).